The following is a 61-amino-acid chain: Small ribosomal subunit protein bS21 (61 aa).

This sequence belongs to the bacterial ribosomal protein bS21 family.

The protein is Small ribosomal subunit protein bS21 of Methylacidiphilum infernorum (isolate V4) (Methylokorus infernorum (strain V4)).